The sequence spans 21 residues: Trypsin (21 aa).

The propeptide at 1-7 (FPIEEDK) is activation peptide. The Peptidase S1 domain occupies 8–21 (IVGGYECPKHXVPW).

The protein belongs to the peptidase S1 family.

The protein resides in the secreted. Its subcellular location is the extracellular space. The enzyme catalyses Preferential cleavage: Arg-|-Xaa, Lys-|-Xaa.. The protein is Trypsin of Protopterus aethiopicus (Marbled lungfish).